A 121-amino-acid chain; its full sequence is Ribosome-binding factor A (121 aa).

Belongs to the RbfA family. As to quaternary structure, monomer. Binds 30S ribosomal subunits, but not 50S ribosomal subunits or 70S ribosomes.

It localises to the cytoplasm. Functionally, one of several proteins that assist in the late maturation steps of the functional core of the 30S ribosomal subunit. Associates with free 30S ribosomal subunits (but not with 30S subunits that are part of 70S ribosomes or polysomes). Required for efficient processing of 16S rRNA. May interact with the 5'-terminal helix region of 16S rRNA. This Paraburkholderia phytofirmans (strain DSM 17436 / LMG 22146 / PsJN) (Burkholderia phytofirmans) protein is Ribosome-binding factor A.